The chain runs to 49 residues: Unknown protein from spot 75 of 2D-PAGE of etiolated coleoptile (49 aa).

This Zea mays (Maize) protein is Unknown protein from spot 75 of 2D-PAGE of etiolated coleoptile.